An 806-amino-acid polypeptide reads, in one-letter code: Leucine--tRNA ligase (806 aa).

Residues 38–48 (PYPSGEIHMGH) carry the 'HIGH' region motif. The 'KMSKS' region signature appears at 572 to 576 (KMSKS). Residue lysine 575 coordinates ATP.

It belongs to the class-I aminoacyl-tRNA synthetase family.

It is found in the cytoplasm. It catalyses the reaction tRNA(Leu) + L-leucine + ATP = L-leucyl-tRNA(Leu) + AMP + diphosphate. The polypeptide is Leucine--tRNA ligase (Helicobacter pylori (strain J99 / ATCC 700824) (Campylobacter pylori J99)).